A 34-amino-acid polypeptide reads, in one-letter code: Non-toxic venom protein (34 aa).

The region spanning 1 to 34 (KEGYPTNSEGCKITXLFNDPYCKGXCINLSTQAD) is the LCN-type CS-alpha/beta domain.

As to expression, expressed by the venom gland.

It localises to the secreted. Does not cause symptoms of intoxication, paralysis or death in insects (A.domestica). The chain is Non-toxic venom protein from Rhopalurus junceus (Caribbean blue scorpion).